The primary structure comprises 437 residues: Beta-1,3-galactosyl-O-glycosyl-glycoprotein beta-1,6-N-acetylglucosaminyltransferase 3 (437 aa).

Over 1-12 (MTSWQRLCWHYR) the chain is Cytoplasmic. The helical; Signal-anchor for type II membrane protein transmembrane segment at 13-30 (LWTLGCYMLLAILALKLS) threads the bilayer. At 31–437 (LRLKCDFDAM…RHKAIYGTEL (407 aa)) the chain is on the lumenal side. 4 disulfide bridges follow: cysteine 70-cysteine 227, cysteine 161-cysteine 381, cysteine 182-cysteine 209, and cysteine 390-cysteine 422. An N-linked (GlcNAc...) asparagine glycan is attached at asparagine 288.

The protein belongs to the glycosyltransferase 14 family. Post-translationally, N-glycosylated.

The protein localises to the golgi apparatus membrane. It catalyses the reaction a 3-O-[beta-D-galactosyl-(1-&gt;3)-N-acetyl-alpha-D-galactosaminyl]-L-seryl-[protein] + UDP-N-acetyl-alpha-D-glucosamine = 3-O-{beta-D-galactosyl-(1-&gt;3)-[N-acetyl-beta-D-glucosaminyl-(1-&gt;6)]-N-acetyl-alpha-D-galactosaminyl}-L-seryl-[protein] + UDP + H(+). It carries out the reaction a 3-O-[beta-D-galactosyl-(1-&gt;3)-N-acetyl-alpha-D-galactosaminyl]-L-threonyl-[protein] + UDP-N-acetyl-alpha-D-glucosamine = a 3-O-{beta-D-galactosyl-(1-&gt;3)-[N-acetyl-beta-D-glucosaminyl-(1-&gt;6)]-N-acetyl-alpha-D-galactosaminyl}-L-threonyl-[protein] + UDP + H(+). The enzyme catalyses a beta-D-Gal-(1-&gt;4)-beta-D-GlcNAc-(1-&gt;3)-beta-D-Gal-(1-&gt;4)-beta-D-GlcNAc derivative + UDP-N-acetyl-alpha-D-glucosamine = a beta-D-Gal-(1-&gt;4)-beta-D-GlcNAc-(1-&gt;3)-[beta-D-GlcNAc-(1-&gt;6)]-beta-D-Gal-(1-&gt;4)-N-acetyl-beta-D-glucosaminyl derivative + UDP + H(+). The catalysed reaction is 3-O-[N-acetyl-beta-D-glucosaminyl-(1-&gt;3)-N-acetyl-alpha-D-galactosaminyl]-L-seryl-[protein] + UDP-N-acetyl-alpha-D-glucosamine = 3-O-[N-acetyl-beta-D-glucosaminyl-(1-&gt;3)-[N-acetyl-beta-D-glucosaminyl-(1-&gt;6)]-N-acetyl-alpha-D-galactosaminyl]-L-seryl-[protein] + UDP + H(+). It catalyses the reaction a 3-O-[N-acetyl-beta-D-glucosaminyl-(1-&gt;3)-N-acetyl-alpha-D-galactosaminyl]-L-threonyl-[protein] + UDP-N-acetyl-alpha-D-glucosamine = 3-O-[N-acetyl-beta-D-glucosaminyl-(1-&gt;3)-[N-acetyl-beta-D-glucosaminyl-(1-&gt;6)]-N-acetyl-alpha-D-galactosaminyl]-L-threonyl-[protein] + UDP + H(+). Its pathway is protein modification; protein glycosylation. Functionally, glycosyltransferase that can synthesize all known mucin beta 6 N-acetylglucosaminides. Mediates core 2 and core 4 O-glycan branching, 2 important steps in mucin-type biosynthesis. Also has I-branching enzyme activity by converting linear into branched poly-N-acetyllactosaminoglycans, leading to introduce the blood group I antigen during embryonic development. The chain is Beta-1,3-galactosyl-O-glycosyl-glycoprotein beta-1,6-N-acetylglucosaminyltransferase 3 (Gcnt3) from Mus musculus (Mouse).